A 103-amino-acid chain; its full sequence is Small ribosomal subunit protein uS10 (103 aa).

This sequence belongs to the universal ribosomal protein uS10 family. In terms of assembly, part of the 30S ribosomal subunit.

In terms of biological role, involved in the binding of tRNA to the ribosomes. The protein is Small ribosomal subunit protein uS10 of Novosphingobium aromaticivorans (strain ATCC 700278 / DSM 12444 / CCUG 56034 / CIP 105152 / NBRC 16084 / F199).